We begin with the raw amino-acid sequence, 231 residues long: MNKRLIKLIFIVCSTVIVTGVLYKYINQNYPKFFKESQNIVSFYALLLLLFSIIYSTFSRKEIRRFCFQLAMWAVIFLVIITGYAFRFELHYAYHRVISALIPSYKWSTEVGEIIIARSGDGHFYINACVNNVKIKFMVDTGASDIALTKEDAQKLGFDLNKLKYTRTYLTANGENKAAPIILNSVVIGTEFKNIKGHVGLGNLDISLLGMSLLERFKGFRIDKDLLILNY.

A run of 3 helical transmembrane segments spans residues 6-26 (IKLI…YKYI), 39-59 (NIVS…STFS), and 66-86 (FCFQ…GYAF).

It is found in the cell membrane. This is an uncharacterized protein from Rickettsia prowazekii (strain Madrid E).